Here is a 385-residue protein sequence, read N- to C-terminus: Circadian-associated transcriptional repressor (385 aa).

Residues 1-26 (MDSPSSVSSYSSYSLSSSFPTSPVNS) show a composition bias toward low complexity. Disordered stretches follow at residues 1–108 (MDSP…SLNT), 203–233 (GGGK…EKMD), and 365–385 (GHRE…LLNL). The span at 33-45 (DSEREDKGAHGPR) shows a compositional bias: basic and acidic residues. Over residues 70–79 (VSGNQHTPSH) the composition is skewed to polar residues.

As to quaternary structure, interacts with PER2, CRY2, BHLHE41, HDAC1 and NR3C1. Interacts with BMAL1.

It is found in the nucleus. It localises to the PML body. Functionally, transcriptional repressor which forms a negative regulatory component of the circadian clock and acts independently of the circadian transcriptional repressors: CRY1, CRY2 and BHLHE41. In a histone deacetylase-dependent manner represses the transcriptional activator activity of the CLOCK-BMAL1 heterodimer. Abrogates the interaction of BMAL1 with the transcriptional coactivator CREBBP and can repress the histone acetyl-transferase activity of the CLOCK-BMAL1 heterodimer, reducing histone acetylation of its target genes. Rhythmically binds the E-box elements (5'-CACGTG-3') on circadian gene promoters and its occupancy shows circadian oscillation antiphasic to BMAL1. Interacts with the glucocorticoid receptor (NR3C1) and contributes to the repressive function in the glucocorticoid response. This Homo sapiens (Human) protein is Circadian-associated transcriptional repressor (CIART).